The following is a 397-amino-acid chain: B3 domain-containing protein At4g34400 (397 aa).

Positions 14–107 (PRFFTVFVSH…IFEVSIFRGY (94 aa)) form a DNA-binding region, TF-B3. Residues 118–255 (ELEEEEEDSV…SSYAPDKEDT (138 aa)) are disordered. Positions 137–160 (TGAKSEMKNTVPEGRDKGKSKVEV) are enriched in basic and acidic residues. Acidic residues-rich tracts occupy residues 161–186 (VEDS…TDTD), 212–227 (SSDD…DSDY), and 235–246 (DIEENSISEEDS).

The protein resides in the nucleus. The protein is B3 domain-containing protein At4g34400 of Arabidopsis thaliana (Mouse-ear cress).